Here is a 172-residue protein sequence, read N- to C-terminus: Interferon tau-3 (172 aa).

2 disulfide bridges follow: Cys-1–Cys-99 and Cys-29–Cys-139.

Belongs to the alpha/beta interferon family. IFN-alphaII subfamily. Constitutively and exclusively expressed in the mononuclear cells of the extraembryonic trophectoderm.

It localises to the secreted. Functionally, paracrine hormone primarily responsible for maternal recognition of pregnancy. Interacts with endometrial receptors, probably type I interferon receptors, and blocks estrogen receptor expression, preventing the estrogen-induced increase in oxytocin receptor expression in the endometrium. This results in the suppression of the pulsatile endometrial release of the luteolytic hormone prostaglandin F2-alpha, hindering the regression of the corpus luteum (luteolysis) and therefore a return to ovarian cyclicity. This, and a possible direct effect of IFN-tau on prostaglandin synthesis, leads in turn to continued ovarian progesterone secretion, which stimulates the secretion by the endometrium of the nutrients required for the growth of the conceptus. In summary, displays particularly high antiviral and antiproliferative potency concurrently with particular weak cytotoxicity, high antiluteolytic activity and immunomodulatory properties. In contrast with other IFNs, IFN-tau is not virally inducible. This is Interferon tau-3 (IFNT3) from Ovis aries (Sheep).